The primary structure comprises 637 residues: Biosynthetic arginine decarboxylase (637 aa).

Lys101 is subject to N6-(pyridoxal phosphate)lysine. 286–296 (FDVGGGLAVDY) lines the substrate pocket.

It belongs to the Orn/Lys/Arg decarboxylase class-II family. SpeA subfamily. It depends on Mg(2+) as a cofactor. Requires pyridoxal 5'-phosphate as cofactor.

It catalyses the reaction L-arginine + H(+) = agmatine + CO2. It functions in the pathway amine and polyamine biosynthesis; agmatine biosynthesis; agmatine from L-arginine: step 1/1. Functionally, catalyzes the biosynthesis of agmatine from arginine. The sequence is that of Biosynthetic arginine decarboxylase from Shewanella baltica (strain OS223).